Here is a 475-residue protein sequence, read N- to C-terminus: Ribulose bisphosphate carboxylase large chain (475 aa).

Positions 1-2 (MS) are excised as a propeptide. Pro3 carries the N-acetylproline modification. An N6,N6,N6-trimethyllysine modification is found at Lys14. 2 residues coordinate substrate: Asn123 and Thr173. The Proton acceptor role is filled by Lys175. A substrate-binding site is contributed by Lys177. Mg(2+) is bound by residues Lys201, Asp203, and Glu204. An N6-carboxylysine modification is found at Lys201. The active-site Proton acceptor is the His294. 3 residues coordinate substrate: Arg295, His327, and Ser379.

The protein belongs to the RuBisCO large chain family. Type I subfamily. In terms of assembly, heterohexadecamer of 8 large chains and 8 small chains; disulfide-linked. The disulfide link is formed within the large subunit homodimers. The cofactor is Mg(2+). Post-translationally, the disulfide bond which can form in the large chain dimeric partners within the hexadecamer appears to be associated with oxidative stress and protein turnover.

It is found in the plastid. Its subcellular location is the chloroplast. The catalysed reaction is 2 (2R)-3-phosphoglycerate + 2 H(+) = D-ribulose 1,5-bisphosphate + CO2 + H2O. The enzyme catalyses D-ribulose 1,5-bisphosphate + O2 = 2-phosphoglycolate + (2R)-3-phosphoglycerate + 2 H(+). Its function is as follows. RuBisCO catalyzes two reactions: the carboxylation of D-ribulose 1,5-bisphosphate, the primary event in carbon dioxide fixation, as well as the oxidative fragmentation of the pentose substrate in the photorespiration process. Both reactions occur simultaneously and in competition at the same active site. This Cucumis sativus (Cucumber) protein is Ribulose bisphosphate carboxylase large chain (rbcL).